We begin with the raw amino-acid sequence, 429 residues long: ATP-dependent RNA helicase RhlB (429 aa).

Residues 9 to 37 carry the Q motif motif; sequence EKFAQMGLEPEVLAGLESKGFHYCTPIQA. In terms of domain architecture, Helicase ATP-binding spans 40 to 219; that stretch reads LPLLVEGHDL…YEHMNHPEHV (180 aa). Residue 53–60 coordinates ATP; the sequence is AQTGTGKT. The DEAD box motif lies at 165 to 168; it reads DEAD. The region spanning 243–390 is the Helicase C-terminal domain; sequence KMLLLLSLME…VSKYDREALL (148 aa). The disordered stretch occupies residues 395 to 429; sequence APKRVVRNRQPVNRNMRDRQGGGNSNNRRRPPRKS.

The protein belongs to the DEAD box helicase family. RhlB subfamily. As to quaternary structure, component of the RNA degradosome, which is a multiprotein complex involved in RNA processing and mRNA degradation.

It is found in the cytoplasm. It catalyses the reaction ATP + H2O = ADP + phosphate + H(+). Its function is as follows. DEAD-box RNA helicase involved in RNA degradation. Has RNA-dependent ATPase activity and unwinds double-stranded RNA. The polypeptide is ATP-dependent RNA helicase RhlB (Aeromonas salmonicida (strain A449)).